We begin with the raw amino-acid sequence, 299 residues long: Virginiamycin B lyase (299 aa).

Residue H229 coordinates substrate. E269 is a binding site for Mg(2+). Residue H271 is the Proton acceptor of the active site. Residue E286 participates in Mg(2+) binding.

Belongs to the Vgb family. As to quaternary structure, monomer. Mg(2+) is required as a cofactor.

Inactivates the type B streptogramin antibiotics by linearizing the lactone ring at the ester linkage, generating a free phenylglycine carboxylate and converting the threonyl moiety into 2-amino-butenoic acid. This Bordetella bronchiseptica (strain ATCC BAA-588 / NCTC 13252 / RB50) (Alcaligenes bronchisepticus) protein is Virginiamycin B lyase.